The sequence spans 286 residues: Thymidylate synthase (286 aa).

Arg21 is a dUMP binding site. (6R)-5,10-methylene-5,6,7,8-tetrahydrofolate is bound at residue Asn51. 150–151 (RR) contributes to the dUMP binding site. Cys170 serves as the catalytic Nucleophile. DUMP is bound by residues 190–193 (RSAD), Asn201, and 231–233 (HIY). Residue Asp193 coordinates (6R)-5,10-methylene-5,6,7,8-tetrahydrofolate. Position 285 (Ala285) interacts with (6R)-5,10-methylene-5,6,7,8-tetrahydrofolate.

Belongs to the thymidylate synthase family. Bacterial-type ThyA subfamily. As to quaternary structure, homodimer.

The protein resides in the cytoplasm. It carries out the reaction dUMP + (6R)-5,10-methylene-5,6,7,8-tetrahydrofolate = 7,8-dihydrofolate + dTMP. It participates in pyrimidine metabolism; dTTP biosynthesis. Functionally, catalyzes the reductive methylation of 2'-deoxyuridine-5'-monophosphate (dUMP) to 2'-deoxythymidine-5'-monophosphate (dTMP) while utilizing 5,10-methylenetetrahydrofolate (mTHF) as the methyl donor and reductant in the reaction, yielding dihydrofolate (DHF) as a by-product. This enzymatic reaction provides an intracellular de novo source of dTMP, an essential precursor for DNA biosynthesis. The polypeptide is Thymidylate synthase (Mycoplasmopsis pulmonis (strain UAB CTIP) (Mycoplasma pulmonis)).